We begin with the raw amino-acid sequence, 355 residues long: Peptide chain release factor 1 (355 aa).

The residue at position 233 (Q233) is an N5-methylglutamine.

Belongs to the prokaryotic/mitochondrial release factor family. Methylated by PrmC. Methylation increases the termination efficiency of RF1.

Its subcellular location is the cytoplasm. Peptide chain release factor 1 directs the termination of translation in response to the peptide chain termination codons UAG and UAA. In Bacillus cereus (strain ATCC 14579 / DSM 31 / CCUG 7414 / JCM 2152 / NBRC 15305 / NCIMB 9373 / NCTC 2599 / NRRL B-3711), this protein is Peptide chain release factor 1.